A 324-amino-acid chain; its full sequence is Reaction center protein M chain (324 aa).

The Cytoplasmic portion of the chain corresponds to 2–51 (ADYQTIYTQIQARGPHITVSGEWGDNDRVGKPFYSYWLGKIGDAQIGPIY). Residues 52–76 (LGASGIAAFAFGSTAILIILFNMAA) form a helical membrane-spanning segment. The Periplasmic segment spans residues 77–110 (EVHFDPLQFFRQFFWLGLYPPKAQYGMGIPPLHD). The helical transmembrane segment at 111-137 (GGWWLMAGLFMTLSLGSWWIRVYSRAR) threads the bilayer. Residues 138 to 142 (ALGLG) lie on the Cytoplasmic side of the membrane. The helical transmembrane segment at 143–166 (THIAWNFAAAIFFVLCIGCIHPTL) threads the bilayer. Over 167-197 (VGSWSEGVPFGIWPHIDWLTAFSIRYGNFYY) the chain is Periplasmic. (7R,8Z)-bacteriochlorophyll b contacts are provided by histidine 181 and histidine 201. The helical transmembrane segment at 198 to 223 (CPWHGFSIGFAYGCGLLFAAHGATIL) threads the bilayer. Histidine 218 and glutamate 233 together coordinate Fe cation. The Cytoplasmic segment spans residues 224–259 (AVARFGGDREIEQITDRGTAVERAALFWRWTIGFNA). Tryptophan 251 provides a ligand contact to a ubiquinone. Residues 260–284 (TIESVHRWGWFFSLMVMVSASVGIL) traverse the membrane as a helical segment. Histidine 265 provides a ligand contact to Fe cation. The Periplasmic portion of the chain corresponds to 285 to 324 (LTGTFVDNWYLWCVKHGAAPDYPAYLPATPDPASLPGAPK).

Belongs to the reaction center PufL/M/PsbA/D family. As to quaternary structure, reaction center is composed of four bacteriochlorophylls, two bacteriopheophytins, two ubiquinones, one iron, and three highly hydrophobic polypeptide chains (designated L, M, and H).

Its subcellular location is the cellular chromatophore membrane. Its function is as follows. The reaction center is a membrane-bound complex that mediates the initial photochemical event in the electron transfer process of photosynthesis. The polypeptide is Reaction center protein M chain (pufM) (Blastochloris viridis (Rhodopseudomonas viridis)).